The chain runs to 652 residues: Na(+)/H(+) antiporter NhaA 3 (652 aa).

The tract at residues 1 to 428 (MTGEIPRGRR…GASLTTWLVF (428 aa)) is na(+)/H(+) antiporter NhaA. Transmembrane regions (helical) follow at residues 32–52 (ETGSARVLLAAAVVALAWVNL), 78–98 (LRFWVNSGLMTFFFLVIGLEV), 114–134 (MLPLLAGIGGILAPIAIYLAF), 142–162 (VGWGVVMATDTALALGMLAVL), 173–193 (FLLTVAVVDDLIVIVVLAIAY), 200–220 (MALFVAAGIFALVLLIRAAGV), 227–249 (LLLGVAAWLAVSESGVDPVVVGL), 306–326 (HPWASYLIVPLFALANVGVVV), 342–362 (GVLFAYVVGKPAGIVIASMLV), 376–396 (WAAIIGVGTVSGIGFTIALLI), and 411–431 (VGILVATVGASLTTWLVFRLA). A Thioredoxin domain is found at 429 to 623 (RLAARLAPAR…LSAAVMSAFA (195 aa)). The disordered stretch occupies residues 626–652 (RLRPEGGREPDHRSEAGSEQPDEEPGT). The span at 627–641 (LRPEGGREPDHRSEA) shows a compositional bias: basic and acidic residues.

The protein in the N-terminal section; belongs to the NhaA Na(+)/H(+) (TC 2.A.33) antiporter family.

The protein localises to the cell membrane. It catalyses the reaction Na(+)(in) + 2 H(+)(out) = Na(+)(out) + 2 H(+)(in). Na(+)/H(+) antiporter that extrudes sodium in exchange for external protons. The sequence is that of Na(+)/H(+) antiporter NhaA 3 from Salinispora tropica (strain ATCC BAA-916 / DSM 44818 / JCM 13857 / NBRC 105044 / CNB-440).